The following is a 753-amino-acid chain: Polyribonucleotide nucleotidyltransferase (753 aa).

Aspartate 488 and aspartate 494 together coordinate Mg(2+). One can recognise a KH domain in the interval 555–614 (PRLLRTKISPDKIGALIGPGGKNIRGIQETTGAVIEVDDEGTVLVASSNKESAQEAMRQV). The region spanning 624-692 (GKIYDGTVSS…EHDRVKLSRR (69 aa)) is the S1 motif domain. Residues 698 to 719 (LGEEDPLAVEGEGGGDSEGGGD) are compositionally biased toward acidic residues. The interval 698–753 (LGEEDPLAVEGEGGGDSEGGGDGEDRPRRRRGGSGGGGGGGRGRGPRRSGGGRDRD) is disordered. Residues 730–740 (GSGGGGGGGRG) are compositionally biased toward gly residues.

Belongs to the polyribonucleotide nucleotidyltransferase family. Mg(2+) is required as a cofactor.

The protein resides in the cytoplasm. The catalysed reaction is RNA(n+1) + phosphate = RNA(n) + a ribonucleoside 5'-diphosphate. In terms of biological role, involved in mRNA degradation. Catalyzes the phosphorolysis of single-stranded polyribonucleotides processively in the 3'- to 5'-direction. The polypeptide is Polyribonucleotide nucleotidyltransferase (Rhodopirellula baltica (strain DSM 10527 / NCIMB 13988 / SH1)).